Here is a 157-residue protein sequence, read N- to C-terminus: NudC domain-containing protein 2 (157 aa).

Ser-2 carries the N-acetylserine modification. The CS domain maps to 14–104 (CGTPWGQWYQ…DAANCWTSLL (91 aa)). The interval 134 to 157 (FDFSGAEISGNYTKGGPDFSNLEK) is disordered. Ser-142 is modified (phosphoserine). Tyr-145 bears the Phosphotyrosine mark.

In terms of assembly, interacts with LIS1.

It localises to the chromosome. Its subcellular location is the centromere. The protein localises to the kinetochore. It is found in the cytoplasm. The protein resides in the cytoskeleton. It localises to the microtubule organizing center. Its subcellular location is the centrosome. The protein localises to the spindle pole. In terms of biological role, may regulate the LIS1/dynein pathway by stabilizing LIS1 with Hsp90 chaperone. The chain is NudC domain-containing protein 2 (Nudcd2) from Mus musculus (Mouse).